The following is a 166-amino-acid chain: Small ribosomal subunit protein bS6 (166 aa).

The tract at residues 97–166 (EEGPSAMMRK…EEAETATDGE (70 aa)) is disordered. Residues 105–159 (RKADRDRERDDRGGGFRGEREGGFRGDREGGFRGGDRDGGGFRGDRGPRRPREEA) are compositionally biased toward basic and acidic residues.

This sequence belongs to the bacterial ribosomal protein bS6 family.

In terms of biological role, binds together with bS18 to 16S ribosomal RNA. The polypeptide is Small ribosomal subunit protein bS6 (Bradyrhizobium diazoefficiens (strain JCM 10833 / BCRC 13528 / IAM 13628 / NBRC 14792 / USDA 110)).